A 225-amino-acid chain; its full sequence is MSVILPESHPEHPFNLIPELCRRFYDLGWATGTGGGISIKMGDNYYVAPSGVQKERIKSNEIFVLNSSQDIVEKPRTDKQLKMSECTPLFFNAYRMRNAGACLHTHSVKCVLISLLCDREFRISHIEMLKGISNNETKKALGFRDTLIVPIIENTDFEKDLTASMAECMEKYPESCAVLVRRHGMYVWSDTWQKAKGAVECIDYLMGLAIQMKQLGLEWEPKDVK.

Position 86 (Cys86) interacts with substrate. Zn(2+) contacts are provided by His104 and His106. Glu127 functions as the Proton donor/acceptor in the catalytic mechanism. His183 lines the Zn(2+) pocket.

It belongs to the aldolase class II family. MtnB subfamily. It depends on Zn(2+) as a cofactor.

It is found in the cytoplasm. The enzyme catalyses 5-(methylsulfanyl)-D-ribulose 1-phosphate = 5-methylsulfanyl-2,3-dioxopentyl phosphate + H2O. Its pathway is amino-acid biosynthesis; L-methionine biosynthesis via salvage pathway; L-methionine from S-methyl-5-thio-alpha-D-ribose 1-phosphate: step 2/6. Catalyzes the dehydration of methylthioribulose-1-phosphate (MTRu-1-P) into 2,3-diketo-5-methylthiopentyl-1-phosphate (DK-MTP-1-P). In Leishmania braziliensis, this protein is Probable methylthioribulose-1-phosphate dehydratase.